A 304-amino-acid chain; its full sequence is MEHAEQIYQRLVEICGERNVLRDEPMKNHTLVRIGGKADFLVWPETYEQVIEVLRLKEEYGLPFTLLGNGSNVIIRDGGLRGIVMQLKHLNRIWREGNNVIAQSGADIKAVSRFALEQHLTGLEFACGIPGSVGGAIMMNAGAYGGEVKDVLDHVKVATLSGELKTLKNEELELGYRTSLISRTHDIVLEVVFALRPGDYAQIKAKMDDLTFQRESKQPLEYPSVGSVFKRPPGYFAGKLIQDSGLQGKGFGGAEVSTKHAGFIINKNNATAADYIATIEMVRKTVKEKFGVDLELEVKIIGEE.

Positions Ile34–Gly198 constitute an FAD-binding PCMH-type domain. The active site involves Arg177. Ser227 functions as the Proton donor in the catalytic mechanism. Residue Glu297 is part of the active site.

This sequence belongs to the MurB family. It depends on FAD as a cofactor.

Its subcellular location is the cytoplasm. The catalysed reaction is UDP-N-acetyl-alpha-D-muramate + NADP(+) = UDP-N-acetyl-3-O-(1-carboxyvinyl)-alpha-D-glucosamine + NADPH + H(+). Its pathway is cell wall biogenesis; peptidoglycan biosynthesis. In terms of biological role, cell wall formation. The protein is UDP-N-acetylenolpyruvoylglucosamine reductase of Geobacillus kaustophilus (strain HTA426).